The primary structure comprises 916 residues: Major intrinsically disordered Notch2-binding receptor 1 (916 aa).

The Cytoplasmic portion of the chain corresponds to methionine 1 to lysine 891. Disordered regions lie at residues glutamate 390–glutamate 409, lysine 553–glutamate 591, serine 648–leucine 675, threonine 705–isoleucine 726, and asparagine 745–glutamine 782. Composition is skewed to basic and acidic residues over residues lysine 553 to leucine 564 and lysine 575 to glutamate 591. Residue serine 711 is modified to Phosphoserine. The span at lysine 750 to tyrosine 771 shows a compositional bias: basic and acidic residues. The chain crosses the membrane as a helical span at residues isoleucine 892–cysteine 912. Residues threonine 913 to serine 916 are Extracellular-facing.

Belongs to the MINAR family. As to quaternary structure, interacts with NOTCH2; this interaction increases MINAR1 stability. Interacts (via N-terminus) with DEPTOR (via PDZ domain); this interaction may stabilize DEPTOR protein by impairing its ubiquitination. As to expression, widely expressed, including in breast epithelial cells and endothelial cells (at protein level). Expression is down-regulated in advanced breast tumors (at protein level).

The protein localises to the cell membrane. Intrinsically disordered protein which may negatively regulate mTOR signaling pathway by stabilizing the mTOR complex component DEPTOR. Negatively regulates angiogenesis. Negatively regulates cell growth. Negatively regulates neurite outgrowth in hippocampal neurons. This chain is Major intrinsically disordered Notch2-binding receptor 1, found in Homo sapiens (Human).